The chain runs to 561 residues: Lysine--tRNA ligase (561 aa).

Mg(2+)-binding residues include Glu-409 and Glu-416.

This sequence belongs to the class-II aminoacyl-tRNA synthetase family. Homodimer. Requires Mg(2+) as cofactor.

The protein localises to the cytoplasm. It carries out the reaction tRNA(Lys) + L-lysine + ATP = L-lysyl-tRNA(Lys) + AMP + diphosphate. The polypeptide is Lysine--tRNA ligase (Trichormus variabilis (strain ATCC 29413 / PCC 7937) (Anabaena variabilis)).